The following is an 813-amino-acid chain: Calpain-7 (813 aa).

The residue at position 1 (methionine 1) is an N-acetylmethionine. Position 95 is a phosphothreonine (threonine 95). A Calpain catalytic domain is found at 232 to 540; the sequence is RERFAYPMPF…YDVVYLSWNP (309 aa). Residues cysteine 290, histidine 458, and asparagine 478 contribute to the active site. A domain III region spans residues 541–701; that stretch reads ALFKESTCIH…INGKWSGQSA (161 aa). The domain N stretch occupies residues 702–813; it reads GGCGNFQETH…TVPIKTTQLQ (112 aa).

It belongs to the peptidase C2 family. In terms of tissue distribution, ubiquitous.

The protein localises to the nucleus. Functionally, calcium-regulated non-lysosomal thiol-protease. The sequence is that of Calpain-7 (Capn7) from Mus musculus (Mouse).